The chain runs to 78 residues: U7-lycotoxin-Ls1f (78 aa).

Positions 1–22 are cleaved as a signal peptide; it reads MKLIIFTGLALLLIVSLIDVEA. Positions 23–26 are excised as a propeptide; that stretch reads QNEG.

This sequence belongs to the neurotoxin 19 (CSTX) family. 07 (U7-Lctx) subfamily. Post-translationally, contains 4 disulfide bonds. Expressed by the venom gland.

The protein resides in the secreted. This chain is U7-lycotoxin-Ls1f, found in Lycosa singoriensis (Wolf spider).